A 455-amino-acid polypeptide reads, in one-letter code: 2-oxoisovalerate dehydrogenase subunit alpha, mitochondrial (455 aa).

The transit peptide at 1–55 (MQGSAKMAMAVAVAVARVWRPSRGLGRTGLPLLRLLGARGLARFHPHRWQQQQHF) directs the protein to the mitochondrion. Thiamine diphosphate-binding residues include Tyr168 and Arg169. Residue Ser216 coordinates K(+). Thiamine diphosphate is bound at residue Ser217. Positions 218, 221, and 222 each coordinate K(+). Mg(2+) is bound at residue Glu248. Gly249, Ala250, and Arg275 together coordinate thiamine diphosphate. Residues Asn277 and Tyr279 each contribute to the Mg(2+) site. His346 contributes to the thiamine diphosphate binding site. Ser347 bears the Phosphoserine; by BCKDK mark. At Thr348 the chain carries Phosphothreonine. Residues Ser349 and Ser357 each carry the phosphoserine modification. N6-acetyllysine; alternate is present on Lys366. Position 366 is an N6-succinyllysine; alternate (Lys366). Lys390 is modified (N6-succinyllysine).

Belongs to the BCKDHA family. In terms of assembly, heterotetramer of 2 alpha/BCKDHA and 2 beta chains/BCKDHB that forms the branched-chain alpha-keto acid decarboxylase (E1) component of the BCKD complex. The branched-chain alpha-ketoacid dehydrogenase is a large complex composed of three major building blocks E1, E2 and E3. It is organized around E2, a 24-meric cubic core composed of DBT, to which are associated 6 to 12 copies of E1, and approximately 6 copies of the dehydrogenase E3, a DLD dimer. Interacts with PPM1K. Requires thiamine diphosphate as cofactor. Mg(2+) serves as cofactor. In terms of processing, phosphorylated at Ser-347 by BCKDK and dephosphorylated by protein phosphatase PPM1K. In terms of tissue distribution, expressed in kidney (at protein level).

Its subcellular location is the mitochondrion matrix. The catalysed reaction is N(6)-[(R)-lipoyl]-L-lysyl-[protein] + 3-methyl-2-oxobutanoate + H(+) = N(6)-[(R)-S(8)-2-methylpropanoyldihydrolipoyl]-L-lysyl-[protein] + CO2. Its function is as follows. Together with BCKDHB forms the heterotetrameric E1 subunit of the mitochondrial branched-chain alpha-ketoacid dehydrogenase (BCKD) complex. The BCKD complex catalyzes the multi-step oxidative decarboxylation of alpha-ketoacids derived from the branched-chain amino-acids valine, leucine and isoleucine producing CO2 and acyl-CoA which is subsequently utilized to produce energy. The E1 subunit catalyzes the first step with the decarboxylation of the alpha-ketoacid forming an enzyme-product intermediate. A reductive acylation mediated by the lipoylamide cofactor of E2 extracts the acyl group from the E1 active site for the next step of the reaction. In Bos taurus (Bovine), this protein is 2-oxoisovalerate dehydrogenase subunit alpha, mitochondrial (BCKDHA).